A 546-amino-acid polypeptide reads, in one-letter code: 2-isopropylmalate synthase (546 aa).

Positions 8-271 constitute a Pyruvate carboxyltransferase domain; sequence ILIFDTTLRD…NSFFKRNPDS (264 aa). Positions 17, 208, 210, and 244 each coordinate Mn(2+). Residues 408–546 form a regulatory domain region; it reads QLSLVQVSCG…NNTYISNPAN (139 aa).

This sequence belongs to the alpha-IPM synthase/homocitrate synthase family. LeuA type 1 subfamily. Homodimer. Mn(2+) serves as cofactor.

The protein resides in the cytoplasm. The catalysed reaction is 3-methyl-2-oxobutanoate + acetyl-CoA + H2O = (2S)-2-isopropylmalate + CoA + H(+). It participates in amino-acid biosynthesis; L-leucine biosynthesis; L-leucine from 3-methyl-2-oxobutanoate: step 1/4. In terms of biological role, catalyzes the condensation of the acetyl group of acetyl-CoA with 3-methyl-2-oxobutanoate (2-ketoisovalerate) to form 3-carboxy-3-hydroxy-4-methylpentanoate (2-isopropylmalate). The polypeptide is 2-isopropylmalate synthase (Prochlorococcus marinus (strain MIT 9301)).